Consider the following 302-residue polypeptide: Sulfate adenylyltransferase subunit 2 (302 aa).

It belongs to the PAPS reductase family. CysD subfamily. Heterodimer composed of CysD, the smaller subunit, and CysN.

It catalyses the reaction sulfate + ATP + H(+) = adenosine 5'-phosphosulfate + diphosphate. It participates in sulfur metabolism; hydrogen sulfide biosynthesis; sulfite from sulfate: step 1/3. Functionally, with CysN forms the ATP sulfurylase (ATPS) that catalyzes the adenylation of sulfate producing adenosine 5'-phosphosulfate (APS) and diphosphate, the first enzymatic step in sulfur assimilation pathway. APS synthesis involves the formation of a high-energy phosphoric-sulfuric acid anhydride bond driven by GTP hydrolysis by CysN coupled to ATP hydrolysis by CysD. The sequence is that of Sulfate adenylyltransferase subunit 2 from Escherichia coli O7:K1 (strain IAI39 / ExPEC).